A 396-amino-acid chain; its full sequence is Endo-1,4-beta-xylanase A (396 aa).

The N-terminal stretch at 1–28 (MITLFRKPFVAGLAISLLVGGGIGNVAA) is a signal peptide. Positions 51–396 (AWQVASLSER…VKPAYWRIID (346 aa)) constitute a GH10 domain. E195 (proton donor) is an active-site residue. E301 acts as the Nucleophile in catalysis.

The protein belongs to the glycosyl hydrolase 10 (cellulase F) family.

The protein resides in the secreted. It carries out the reaction Endohydrolysis of (1-&gt;4)-beta-D-xylosidic linkages in xylans.. The protein operates within glycan degradation; xylan degradation. This Halalkalibacterium halodurans (strain ATCC BAA-125 / DSM 18197 / FERM 7344 / JCM 9153 / C-125) (Bacillus halodurans) protein is Endo-1,4-beta-xylanase A (xynA).